A 465-amino-acid polypeptide reads, in one-letter code: Light-independent protochlorophyllide reductase subunit N (465 aa).

Residues Cys-22, Cys-47, and Cys-107 each coordinate [4Fe-4S] cluster.

This sequence belongs to the BchN/ChlN family. Protochlorophyllide reductase is composed of three subunits; ChlL, ChlN and ChlB. Forms a heterotetramer of two ChlB and two ChlN subunits. Requires [4Fe-4S] cluster as cofactor.

It is found in the plastid. The protein resides in the chloroplast. It carries out the reaction chlorophyllide a + oxidized 2[4Fe-4S]-[ferredoxin] + 2 ADP + 2 phosphate = protochlorophyllide a + reduced 2[4Fe-4S]-[ferredoxin] + 2 ATP + 2 H2O. It participates in porphyrin-containing compound metabolism; chlorophyll biosynthesis (light-independent). In terms of biological role, component of the dark-operative protochlorophyllide reductase (DPOR) that uses Mg-ATP and reduced ferredoxin to reduce ring D of protochlorophyllide (Pchlide) to form chlorophyllide a (Chlide). This reaction is light-independent. The NB-protein (ChlN-ChlB) is the catalytic component of the complex. The protein is Light-independent protochlorophyllide reductase subunit N of Marchantia polymorpha (Common liverwort).